A 95-amino-acid chain; its full sequence is Small ribosomal subunit protein uS17 (95 aa).

Belongs to the universal ribosomal protein uS17 family. In terms of assembly, part of the 30S ribosomal subunit.

Functionally, one of the primary rRNA binding proteins, it binds specifically to the 5'-end of 16S ribosomal RNA. The sequence is that of Small ribosomal subunit protein uS17 from Streptomyces coelicolor (strain ATCC BAA-471 / A3(2) / M145).